The chain runs to 450 residues: Putative receptor-like protein kinase At1g72540 (450 aa).

Threonine 73 is modified (phosphothreonine). The 282-residue stretch at 84 to 365 (FSKYNFLGEG…TVVKTLEPIL (282 aa)) folds into the Protein kinase domain. Residues 90 to 98 (LGEGGFGEV) and lysine 119 each bind ATP. Tyrosine 164 is subject to Phosphotyrosine. Aspartate 214 acts as the Proton acceptor in catalysis. Serine 218 is subject to Phosphoserine. Residue threonine 254 is modified to Phosphothreonine. Tyrosine 262 is modified (phosphotyrosine).

It belongs to the protein kinase superfamily. Ser/Thr protein kinase family.

It catalyses the reaction L-seryl-[protein] + ATP = O-phospho-L-seryl-[protein] + ADP + H(+). It carries out the reaction L-threonyl-[protein] + ATP = O-phospho-L-threonyl-[protein] + ADP + H(+). This is Putative receptor-like protein kinase At1g72540 from Arabidopsis thaliana (Mouse-ear cress).